The primary structure comprises 299 residues: tRNA dimethylallyltransferase (299 aa).

Position 13–20 (G13–T20) interacts with ATP. Substrate is bound at residue T15–T20. The segment at D38 to Q41 is interaction with substrate tRNA.

It belongs to the IPP transferase family. As to quaternary structure, monomer. It depends on Mg(2+) as a cofactor.

It carries out the reaction adenosine(37) in tRNA + dimethylallyl diphosphate = N(6)-dimethylallyladenosine(37) in tRNA + diphosphate. Functionally, catalyzes the transfer of a dimethylallyl group onto the adenine at position 37 in tRNAs that read codons beginning with uridine, leading to the formation of N6-(dimethylallyl)adenosine (i(6)A). This is tRNA dimethylallyltransferase from Synechococcus sp. (strain CC9605).